We begin with the raw amino-acid sequence, 108 residues long: Small ribosomal subunit protein bS6 (108 aa).

Belongs to the bacterial ribosomal protein bS6 family.

Its function is as follows. Binds together with bS18 to 16S ribosomal RNA. The chain is Small ribosomal subunit protein bS6 from Nostoc sp. (strain PCC 7120 / SAG 25.82 / UTEX 2576).